The chain runs to 315 residues: Replication factor C small subunit (315 aa).

43–50 contacts ATP; that stretch reads GSPGVGKT.

It belongs to the activator 1 small subunits family. RfcS subfamily. In terms of assembly, heteromultimer composed of small subunits (RfcS) and large subunits (RfcL).

In terms of biological role, part of the RFC clamp loader complex which loads the PCNA sliding clamp onto DNA. In Methanococcus maripaludis (strain C6 / ATCC BAA-1332), this protein is Replication factor C small subunit.